The primary structure comprises 445 residues: RNA-binding protein asd-2 (445 aa).

Positions 22-63 (TVIPPPPNDSGHEFIGPSSGPPQVTITPSGVQSGSANGVSTS) are disordered. The span at 42-63 (PPQVTITPSGVQSGSANGVSTS) shows a compositional bias: polar residues. Residues 71 to 128 (EYLSQLLKDKKQLAAFPNVFHHLERLADEEINKVRVVLFQCEFSKESAPLPDAEGDST) are qua1 domain. Positions 145–171 (NFVGRILGPRGMTAKQLEQETGCKIMV) constitute a KH domain. A qua2 domain; involved in RNA binding region spans residues 230–253 (APEGEDDLKRKQLMELAIINGTYR).

As to quaternary structure, interacts with sup-12; in the presence of RNA, but with weak affinity in the absence of RNA. Isoform b: Expressed in the hypodermis and pharyngeal muscles. Isoform c: Expressed in body wall muscles and phayngeal muscles.

It localises to the nucleus. Functionally, RNA-binding protein that binds to the 5'-NACUAAY-N(1,20)-UAAY-3' consensus sequence in pre-mRNA introns to promote alternative splicing. Required for mutually exclusive alternative splicing where it modulates the switch between mutually exclusive exons during pre-mRNA maturation. Involved in muscle-specific gene expression regulating the alternative splicing of genes such as let-2 and unc-60 to ensure that their respective isoforms are expressed in muscle. Promotes the removal of intron 10 from let-2 pre-mRNA to allow for the exclusive expression of the muscle-specific let-2 isoform (as opposed to the non-muscle-specific isoform expressed in embryos) in body wall muscles during late larval and adult stages of development. Binds cooperatively with RNA-binding protein sup-12 to intron 1A of the unc-60 pre-mRNA to promote alternative splicing and expression of the muscle specific isoform of unc-60. This chain is RNA-binding protein asd-2, found in Caenorhabditis elegans.